The sequence spans 216 residues: Phosphatidylserine decarboxylase proenzyme (216 aa).

S183 (schiff-base intermediate with substrate; via pyruvic acid) is an active-site residue. At S183 the chain carries Pyruvic acid (Ser); by autocatalysis.

This sequence belongs to the phosphatidylserine decarboxylase family. PSD-A subfamily. As to quaternary structure, heterodimer of a large membrane-associated beta subunit and a small pyruvoyl-containing alpha subunit. It depends on pyruvate as a cofactor. In terms of processing, is synthesized initially as an inactive proenzyme. Formation of the active enzyme involves a self-maturation process in which the active site pyruvoyl group is generated from an internal serine residue via an autocatalytic post-translational modification. Two non-identical subunits are generated from the proenzyme in this reaction, and the pyruvate is formed at the N-terminus of the alpha chain, which is derived from the carboxyl end of the proenzyme. The post-translation cleavage follows an unusual pathway, termed non-hydrolytic serinolysis, in which the side chain hydroxyl group of the serine supplies its oxygen atom to form the C-terminus of the beta chain, while the remainder of the serine residue undergoes an oxidative deamination to produce ammonia and the pyruvoyl prosthetic group on the alpha chain.

It is found in the cell membrane. The catalysed reaction is a 1,2-diacyl-sn-glycero-3-phospho-L-serine + H(+) = a 1,2-diacyl-sn-glycero-3-phosphoethanolamine + CO2. Its pathway is phospholipid metabolism; phosphatidylethanolamine biosynthesis; phosphatidylethanolamine from CDP-diacylglycerol: step 2/2. Functionally, catalyzes the formation of phosphatidylethanolamine (PtdEtn) from phosphatidylserine (PtdSer). This Chlorobaculum tepidum (strain ATCC 49652 / DSM 12025 / NBRC 103806 / TLS) (Chlorobium tepidum) protein is Phosphatidylserine decarboxylase proenzyme.